The following is a 302-amino-acid chain: AP-1 complex-associated regulatory protein (302 aa).

Serine 29 carries the post-translational modification Phosphoserine. An interaction with AP1G1 region spans residues 78 to 138 (DSIAEKQKDL…ERQRIVQQYH (61 aa)). Positions 80 to 138 (IAEKQKDLDKKIQKELALQEEKLRLEEEALYAAQREAARAAKQRKLLEQERQRIVQQYH) form a coiled coil. Over residues 188 to 206 (CDLMTKTKSTSGNDDSTSL) the composition is skewed to polar residues. Residues 188–258 (CDLMTKTKST…TSASDDSNGL (71 aa)) are disordered. The interval 199 to 215 (GNDDSTSLDLEWEDEEG) is sufficient for association with the Arp2/3 complex. Residues 221 to 233 (PMRERSKTEEDIL) are compositionally biased toward basic and acidic residues. Position 226 is a phosphoserine (serine 226). The residue at position 228 (threonine 228) is a Phosphothreonine. Residues 242–255 (KKTGSNPTSASDDS) are compositionally biased toward polar residues.

As to quaternary structure, interacts (via coiled-coil domain) with AP1G1 (via GAE domain). Interacts with KIF5B. Associates with the Arp2/3 complex. In terms of processing, palmitoylated.

The protein resides in the golgi apparatus. It is found in the trans-Golgi network. Its subcellular location is the late endosome. The protein localises to the early endosome. Its function is as follows. Necessary for adaptor protein complex 1 (AP-1)-dependent transport between the trans-Golgi network and endosomes. Regulates the membrane association of AP1G1/gamma1-adaptin, one of the subunits of the AP-1 adaptor complex. The direct interaction with AP1G1/gamma1-adaptin attenuates the release of the AP-1 complex from membranes. Regulates endosomal membrane traffic via association with AP-1 and KIF5B thus linking kinesin-based plus-end-directed microtubular transport to AP-1-dependent membrane traffic. May act as effector of AP-1 in calcium-induced endo-lysosome secretion. Inhibits Arp2/3 complex function; negatively regulates cell spreading, size and motility via intracellular sequestration of the Arp2/3 complex. This Homo sapiens (Human) protein is AP-1 complex-associated regulatory protein (AP1AR).